Here is a 56-residue protein sequence, read N- to C-terminus: Small ribosomal subunit protein uS14 (56 aa).

Residues Cys21, Cys24, Cys39, and Cys42 each coordinate Zn(2+).

Belongs to the universal ribosomal protein uS14 family. It depends on Zn(2+) as a cofactor.

This Triticum aestivum (Wheat) protein is Small ribosomal subunit protein uS14 (RPS29).